We begin with the raw amino-acid sequence, 102 residues long: uncharacterized protein (102 aa).

A run of 2 helical transmembrane segments spans residues 28–48 (YLNL…LISI) and 81–101 (LSVL…AGIG).

Its subcellular location is the membrane. This is an uncharacterized protein from Saccharomyces cerevisiae (strain ATCC 204508 / S288c) (Baker's yeast).